We begin with the raw amino-acid sequence, 314 residues long: Testis-specific Y-encoded protein 4 (314 aa).

This sequence belongs to the nucleosome assembly protein (NAP) family.

The protein localises to the cytoplasm. Its subcellular location is the nucleus. Its function is as follows. May be involved in sperm differentiation and proliferation. The sequence is that of Testis-specific Y-encoded protein 4 (TSPY4) from Homo sapiens (Human).